The chain runs to 387 residues: Phosphoglycerate kinase (387 aa).

Substrate contacts are provided by residues 21–23 (DLN), Arg36, 59–62 (HLGR), Arg113, and Arg146. Residues Lys197, Glu314, and 340-343 (GGDT) contribute to the ATP site.

Belongs to the phosphoglycerate kinase family. Monomer.

The protein resides in the cytoplasm. The enzyme catalyses (2R)-3-phosphoglycerate + ATP = (2R)-3-phospho-glyceroyl phosphate + ADP. Its pathway is carbohydrate degradation; glycolysis; pyruvate from D-glyceraldehyde 3-phosphate: step 2/5. The sequence is that of Phosphoglycerate kinase from Pseudomonas fluorescens (strain ATCC BAA-477 / NRRL B-23932 / Pf-5).